Reading from the N-terminus, the 1502-residue chain is Rho GTPase-activating protein 5 (1502 aa).

4 consecutive FF domains span residues 267–325 (QLVV…HIEQ), 366–420 (KLME…HVQH), 427–481 (RVEM…HQRE), and 482–548 (IVEK…HIGF). Residue tyrosine 550 is modified to 3'-nitrotyrosine. Residues serine 590 and serine 765 each carry the phosphoserine modification. The pG1 pseudoGTPase domain occupies 590 to 763 (STNIDKVNLF…LESVKHNLDV (174 aa)). A pG2 pseudoGTPase domain is found at 779–944 (RIVMCAMCGD…FSDVLEKKNM (166 aa)). Phosphoserine occurs at positions 951 and 968. Disordered stretches follow at residues 975 to 1004 (YNNY…LPTP), 1022 to 1050 (HSTP…PKTN), and 1069 to 1089 (NPRK…DPSD). Positions 1036 to 1045 (VPPPIKPKPV) are enriched in pro residues. Serine 1115 carries the phosphoserine modification. Disordered stretches follow at residues 1125-1156 (FVNN…YKYK) and 1168-1254 (YRRT…TRRN). Residues 1140–1150 (RTSKSHGERRP) show a composition bias toward basic and acidic residues. Residues serine 1173, serine 1176, serine 1195, serine 1202, and serine 1218 each carry the phosphoserine modification. Residues 1262–1449 (MPLQDLVTAE…TFIQQCQFFF (188 aa)) enclose the Rho-GAP domain.

As to quaternary structure, may interact with RASA1/p120GAP. As to expression, detected in skin fibroblasts (at protein level).

It is found in the cytoplasm. The protein resides in the cell membrane. GTPase-activating protein for Rho family members. The chain is Rho GTPase-activating protein 5 (ARHGAP5) from Homo sapiens (Human).